The chain runs to 347 residues: NADH-ubiquinone oxidoreductase chain 2 (347 aa).

The next 11 helical transmembrane spans lie at 1–21, 25–45, 59–79, 96–116, 123–143, 153–173, 178–198, 200–220, 239–259, 278–298, and 325–345; these read MNPL…IITM, HWLT…PLIM, YFLI…INFM, TIIL…FWVP, LLST…SILY, IILA…LNQT, IMAY…IYNP, LMLL…TILI, ILMM…PLSG, ISLT…RLIY, and FLPT…MMFI.

Belongs to the complex I subunit 2 family. As to quaternary structure, core subunit of respiratory chain NADH dehydrogenase (Complex I) which is composed of 45 different subunits. Interacts with TMEM242.

It localises to the mitochondrion inner membrane. It catalyses the reaction a ubiquinone + NADH + 5 H(+)(in) = a ubiquinol + NAD(+) + 4 H(+)(out). Its function is as follows. Core subunit of the mitochondrial membrane respiratory chain NADH dehydrogenase (Complex I) that is believed to belong to the minimal assembly required for catalysis. Complex I functions in the transfer of electrons from NADH to the respiratory chain. The immediate electron acceptor for the enzyme is believed to be ubiquinone. This chain is NADH-ubiquinone oxidoreductase chain 2, found in Oryzorictes hova (Hova rice tenrec).